The primary structure comprises 150 residues: Single-stranded DNA-binding protein 1 (150 aa).

The 104-residue stretch at Met1 to Glu104 folds into the SSB domain. The span at Leu103–Asn120 shows a compositional bias: polar residues. The disordered stretch occupies residues Leu103 to Phe150. Low complexity predominate over residues Lys121–Ala138. Residues Asp145–Phe150 carry the Important for interaction with partner proteins motif.

Homotetramer.

Its function is as follows. Plays an important role in DNA replication, recombination and repair. Binds to ssDNA and to an array of partner proteins to recruit them to their sites of action during DNA metabolism. This is Single-stranded DNA-binding protein 1 (ssb1) from Lactococcus lactis subsp. lactis (strain IL1403) (Streptococcus lactis).